The following is a 117-amino-acid chain: MMTNRRFRKPSAWRLLLLLLPLVVLLSMSSRRLPDEVMLHITPLHQGAPLPDGFYIYQRLNERGIAIKSITPENDSIIVRLSSPEQSGAAREILSTALPYAIVIAQRSNGTSPVTRS.

Over methionine 1–serine 11 the chain is Cytoplasmic. Residues alanine 12 to serine 29 traverse the membrane as a helical segment. At serine 30–serine 117 the chain is on the periplasmic side.

It belongs to the MzrA family. In terms of assembly, interacts with EnvZ.

It is found in the cell inner membrane. Functionally, modulates the activity of the EnvZ/OmpR two-component regulatory system, probably by directly modulating EnvZ enzymatic activity and increasing stability of phosphorylated OmpR. The chain is Modulator protein MzrA from Dickeya dadantii (strain 3937) (Erwinia chrysanthemi (strain 3937)).